Here is a 174-residue protein sequence, read N- to C-terminus: Gamma-crystallin C (174 aa).

2 Beta/gamma crystallin 'Greek key' domains span residues 2-40 (GKITFYEDRGFQGRCYQCSSDCPNLQPYFSRCNSIRVDS) and 41-83 (GCWM…CLIS). Position 23 is an S-methylcysteine (Cys-23). The segment at 84–87 (DTSS) is connecting peptide. Beta/gamma crystallin 'Greek key' domains lie at 88–128 (HRLR…HVLE) and 129–171 (GCWV…RRVV).

This sequence belongs to the beta/gamma-crystallin family.

In terms of biological role, crystallins are the dominant structural components of the vertebrate eye lens. The sequence is that of Gamma-crystallin C (CRYGC) from Bos taurus (Bovine).